Here is a 1435-residue protein sequence, read N- to C-terminus: RNA-directed RNA polymerase VP1 (1435 aa).

The RdRp catalytic domain occupies 604 to 880 (VLHNVLRPAY…KGVLGAPELF (277 aa)).

This sequence belongs to the reoviridae RNA-directed RNA polymerase family. As to quaternary structure, interacts with VP4.

The catalysed reaction is RNA(n) + a ribonucleoside 5'-triphosphate = RNA(n+1) + diphosphate. Its function is as follows. RNA-directed RNA polymerase involved in transcription and genome replication. Following infection, catalyzes the synthesis of fully conservative plus strands. After core assembly, which consists in recruitment of one capped plus-strand for each genomic segments and polymerase complexes, the polymerase switches mode and catalyzes the synthesis of complementary minus-strands. The protein is RNA-directed RNA polymerase VP1 of Callospermophilus lateralis (Golden-mantled ground squirrel).